The chain runs to 78 residues: Large ribosomal subunit protein bL28 (78 aa).

It belongs to the bacterial ribosomal protein bL28 family.

The polypeptide is Large ribosomal subunit protein bL28 (rpmB) (Treponema pallidum (strain Nichols)).